The primary structure comprises 334 residues: N,N'-diacetyllegionaminic acid synthase (334 aa).

The AFP-like domain maps to S282–E334.

The enzyme catalyses 2,4-diacetamido-2,4,6-trideoxy-alpha-D-mannopyranose + phosphoenolpyruvate + H2O = N,N-diacetyllegionaminate + phosphate. Involved in biosynthesis of legionaminic acid (5,7-diamino-3,5,7,9-tetradeoxy-D-glycero-D-galacto-non-2-ulosonic acid)(Leg), a sialic acid-like derivative that is incorporated into flagellin via O-linkage to Ser/Thr. Catalyzes the condensation of 2,4-diacetamido-2,4,6-trideoxymannose with phosphoenolpyruvate (PEP) to give N,N'-diacetyllegionaminic acid. This chain is N,N'-diacetyllegionaminic acid synthase (legI), found in Campylobacter jejuni subsp. jejuni serotype O:2 (strain ATCC 700819 / NCTC 11168).